The following is a 473-amino-acid chain: Uronate isomerase (473 aa).

This sequence belongs to the metallo-dependent hydrolases superfamily. Uronate isomerase family.

The catalysed reaction is D-glucuronate = D-fructuronate. It catalyses the reaction aldehydo-D-galacturonate = keto-D-tagaturonate. Its pathway is carbohydrate metabolism; pentose and glucuronate interconversion. The polypeptide is Uronate isomerase (Bacillus licheniformis (strain ATCC 14580 / DSM 13 / JCM 2505 / CCUG 7422 / NBRC 12200 / NCIMB 9375 / NCTC 10341 / NRRL NRS-1264 / Gibson 46)).